The primary structure comprises 196 residues: dTTP/UTP pyrophosphatase (196 aa).

The Proton acceptor role is filled by D73.

The protein belongs to the Maf family. YhdE subfamily. A divalent metal cation serves as cofactor.

The protein localises to the cytoplasm. It catalyses the reaction dTTP + H2O = dTMP + diphosphate + H(+). The catalysed reaction is UTP + H2O = UMP + diphosphate + H(+). Functionally, nucleoside triphosphate pyrophosphatase that hydrolyzes dTTP and UTP. May have a dual role in cell division arrest and in preventing the incorporation of modified nucleotides into cellular nucleic acids. In Myxococcus xanthus (strain DK1622), this protein is dTTP/UTP pyrophosphatase.